Here is a 157-residue protein sequence, read N- to C-terminus: Ribonuclease H (157 aa).

Residues 2–145 (NAEISKIYTD…CDAIARAFAA (144 aa)) form the RNase H type-1 domain. Mg(2+)-binding residues include aspartate 11, glutamate 50, aspartate 74, and aspartate 137.

The protein belongs to the RNase H family. In terms of assembly, monomer. It depends on Mg(2+) as a cofactor.

It localises to the cytoplasm. The catalysed reaction is Endonucleolytic cleavage to 5'-phosphomonoester.. Functionally, endonuclease that specifically degrades the RNA of RNA-DNA hybrids. The sequence is that of Ribonuclease H from Cyanothece sp. (strain PCC 7425 / ATCC 29141).